A 428-amino-acid chain; its full sequence is GTPase Obg (428 aa).

In terms of domain architecture, Obg spans 1 to 158; that stretch reads MFVDQVKIYV…RYIVLELKVL (158 aa). Residues 118–143 form a disordered region; the sequence is KGGRGGRGNTRFATPANPAPQLSENG. One can recognise an OBG-type G domain in the interval 159–329; sequence ADVGLVGFPS…LLFEIADRLE (171 aa). GTP is bound by residues 165 to 172, 190 to 194, 212 to 215, 282 to 285, and 310 to 312; these read GFPSVGKS, FTTLN, DLPG, NKMD, and SAV. The Mg(2+) site is built by serine 172 and threonine 192. Positions 350–428 constitute an OCT domain; it reads KLEDEEAPFE…LLEFEFEFID (79 aa).

It belongs to the TRAFAC class OBG-HflX-like GTPase superfamily. OBG GTPase family. In terms of assembly, monomer. It depends on Mg(2+) as a cofactor.

Its subcellular location is the cytoplasm. Its function is as follows. An essential GTPase which binds GTP, GDP and possibly (p)ppGpp with moderate affinity, with high nucleotide exchange rates and a fairly low GTP hydrolysis rate. Plays a role in control of the cell cycle, stress response, ribosome biogenesis and in those bacteria that undergo differentiation, in morphogenesis control. The polypeptide is GTPase Obg (Bacillus licheniformis (strain ATCC 14580 / DSM 13 / JCM 2505 / CCUG 7422 / NBRC 12200 / NCIMB 9375 / NCTC 10341 / NRRL NRS-1264 / Gibson 46)).